The sequence spans 380 residues: MEKELKVITIDELKKYIRNNEEDKIEEVDVVTSATCGIMSGTAGIFHIPFNEVFKRAEEIYLNDIKGVVGICPNEFLGKVDAIFYGEVGFLFKDLVKGKVVEAKAISEGKIYKNEITIDDLPTAKMIGTRMAFKNYTAITNLSDEEVNTIFHRLPLKKGEASFSGCGMLNPLENMVIKDEKDVVGKKALLNGAEAIILGFGTRASIEKPNLMMSADMKDMDAYYLGGFVTSNGIEIYNTIAVPIKVDEHKEALKKLDKDITLPLVNIFGREIIDIGSYAEVWENVDLRPKIYQDKCKNCRECLVEKYCPTFAIKRENGKIKITEDCFGCGVCNICPYGVFKTKLGSVCGIPITCRQSDRKRALKLAKELKKKIERGEFKI.

The 4Fe-4S ferredoxin-type domain maps to Leu287 to Gly318.

This is an uncharacterized protein from Methanocaldococcus jannaschii (strain ATCC 43067 / DSM 2661 / JAL-1 / JCM 10045 / NBRC 100440) (Methanococcus jannaschii).